A 251-amino-acid polypeptide reads, in one-letter code: CDP-diacylglycerol pyrophosphatase (251 aa).

The helical transmembrane segment at 5–25 (GYFLLAVIVIVAAAGVGYWKF) threads the bilayer.

It belongs to the Cdh family.

The protein resides in the cell inner membrane. It catalyses the reaction a CDP-1,2-diacyl-sn-glycerol + H2O = a 1,2-diacyl-sn-glycero-3-phosphate + CMP + 2 H(+). The protein operates within phospholipid metabolism; CDP-diacylglycerol degradation; phosphatidate from CDP-diacylglycerol: step 1/1. This chain is CDP-diacylglycerol pyrophosphatase, found in Salmonella enteritidis PT4 (strain P125109).